A 362-amino-acid chain; its full sequence is L-arginine:L-lysine amidinotransferase (362 aa).

Catalysis depends on residues Asp195 and His244. Catalysis depends on Cys346, which acts as the Amidino-cysteine intermediate.

The protein belongs to the amidinotransferase family.

It carries out the reaction L-lysine + L-arginine = L-homoarginine + L-ornithine. It catalyses the reaction L-canavanine + L-ornithine = L-canaline + L-arginine + H(+). Its function is as follows. Involved in the biosynthesis of phaseolotoxin, a nonhost-specific toxin which is a key component in the development of the halo blight disease of beans. Catalyzes the transfer of an amidino group from arginine to lysine to produce one molecule of homoarginine and one molecule of ornithine, both being precursors in the biosynthesis of phaseolotoxin. Can also use L-canavanine as an alternative amidine donor with L-ornithine as amidine acceptor. In Pseudomonas savastanoi pv. phaseolicola (Pseudomonas syringae pv. phaseolicola), this protein is L-arginine:L-lysine amidinotransferase.